Reading from the N-terminus, the 158-residue chain is Cytochrome c-type biogenesis protein CcmE (158 aa).

Over methionine 1–arginine 8 the chain is Cytoplasmic. A helical; Signal-anchor for type II membrane protein transmembrane segment spans residues leucine 9–alanine 29. At leucine 30–arginine 158 the chain is on the periplasmic side. Histidine 130 and tyrosine 134 together coordinate heme.

It belongs to the CcmE/CycJ family.

The protein resides in the cell inner membrane. Heme chaperone required for the biogenesis of c-type cytochromes. Transiently binds heme delivered by CcmC and transfers the heme to apo-cytochromes in a process facilitated by CcmF and CcmH. The chain is Cytochrome c-type biogenesis protein CcmE from Tatumella citrea (Pantoea citrea).